Consider the following 124-residue polypeptide: Small ribosomal subunit protein uS13 (124 aa).

Residues 89-124 (GRRHRQGLPVRGQRTKTNARTRKGPKRTVAGKKKAK) form a disordered region. The segment covering 101-124 (QRTKTNARTRKGPKRTVAGKKKAK) has biased composition (basic residues).

Belongs to the universal ribosomal protein uS13 family. In terms of assembly, part of the 30S ribosomal subunit. Forms a loose heterodimer with protein S19. Forms two bridges to the 50S subunit in the 70S ribosome.

In terms of biological role, located at the top of the head of the 30S subunit, it contacts several helices of the 16S rRNA. In the 70S ribosome it contacts the 23S rRNA (bridge B1a) and protein L5 of the 50S subunit (bridge B1b), connecting the 2 subunits; these bridges are implicated in subunit movement. Contacts the tRNAs in the A and P-sites. The polypeptide is Small ribosomal subunit protein uS13 (Nocardioides sp. (strain ATCC BAA-499 / JS614)).